We begin with the raw amino-acid sequence, 619 residues long: Very-long-chain aldehyde decarbonylase GL1-4 (619 aa).

A run of 5 helical transmembrane segments spans residues 45 to 65, 94 to 114, 126 to 146, 178 to 198, and 325 to 345; these read IAFSLILPSLLLRMIHNQIWI, GWDDQILFNGLVFYAGYLAMP, GAVVTALVHTGPVEFLYYWFH, FAEHVVYFILFAIPILSTIYL, and AWYMWTLWPLAWLSMVLAWIY. Positions 138–272 constitute a Fatty acid hydroxylase domain; that stretch reads VEFLYYWFHR…MPFYDYIYNT (135 aa).

The protein belongs to the sterol desaturase family. As to quaternary structure, homodimer.

The protein localises to the endoplasmic reticulum membrane. It carries out the reaction a long-chain fatty aldehyde + 2 NADPH + O2 + H(+) = a long-chain alkane + formate + 2 NADP(+) + H2O. Functionally, aldehyde decarbonylase involved in the conversion of aldehydes to alkanes. Core component of a very-long-chain alkane synthesis complex. The polypeptide is Very-long-chain aldehyde decarbonylase GL1-4 (Oryza sativa subsp. indica (Rice)).